Consider the following 211-residue polypeptide: Peroxiredoxin (211 aa).

A Thioredoxin domain is found at Pro-2 to Val-156. Catalysis depends on Cys-44, which acts as the Cysteine sulfenic acid (-SOH) intermediate. Arg-119 contributes to the substrate binding site. Cys-198 and Cys-204 are disulfide-bonded.

The protein belongs to the peroxiredoxin family. Prx6 subfamily. As to quaternary structure, homodecamer. Pentamer of dimers that assemble into a ring structure.

The protein resides in the cytoplasm. It catalyses the reaction a hydroperoxide + [thioredoxin]-dithiol = an alcohol + [thioredoxin]-disulfide + H2O. Its function is as follows. Thiol-specific peroxidase that catalyzes the reduction of hydrogen peroxide and organic hydroperoxides to water and alcohols, respectively. Plays a role in cell protection against oxidative stress by detoxifying peroxides. This Methanothermobacter marburgensis (strain ATCC BAA-927 / DSM 2133 / JCM 14651 / NBRC 100331 / OCM 82 / Marburg) (Methanobacterium thermoautotrophicum) protein is Peroxiredoxin.